A 158-amino-acid chain; its full sequence is SsrA-binding protein (158 aa).

Over residues 133–152 (KRQTLREQQDNREAQREMRE) the composition is skewed to basic and acidic residues. The disordered stretch occupies residues 133-158 (KRQTLREQQDNREAQREMRERNRRRG).

This sequence belongs to the SmpB family.

The protein localises to the cytoplasm. Functionally, required for rescue of stalled ribosomes mediated by trans-translation. Binds to transfer-messenger RNA (tmRNA), required for stable association of tmRNA with ribosomes. tmRNA and SmpB together mimic tRNA shape, replacing the anticodon stem-loop with SmpB. tmRNA is encoded by the ssrA gene; the 2 termini fold to resemble tRNA(Ala) and it encodes a 'tag peptide', a short internal open reading frame. During trans-translation Ala-aminoacylated tmRNA acts like a tRNA, entering the A-site of stalled ribosomes, displacing the stalled mRNA. The ribosome then switches to translate the ORF on the tmRNA; the nascent peptide is terminated with the 'tag peptide' encoded by the tmRNA and targeted for degradation. The ribosome is freed to recommence translation, which seems to be the essential function of trans-translation. The chain is SsrA-binding protein from Pseudarthrobacter chlorophenolicus (strain ATCC 700700 / DSM 12829 / CIP 107037 / JCM 12360 / KCTC 9906 / NCIMB 13794 / A6) (Arthrobacter chlorophenolicus).